The sequence spans 206 residues: Imidazoleglycerol-phosphate dehydratase (206 aa).

The protein belongs to the imidazoleglycerol-phosphate dehydratase family.

The protein resides in the cytoplasm. It catalyses the reaction D-erythro-1-(imidazol-4-yl)glycerol 3-phosphate = 3-(imidazol-4-yl)-2-oxopropyl phosphate + H2O. The protein operates within amino-acid biosynthesis; L-histidine biosynthesis; L-histidine from 5-phospho-alpha-D-ribose 1-diphosphate: step 6/9. This is Imidazoleglycerol-phosphate dehydratase from Synechococcus sp. (strain JA-3-3Ab) (Cyanobacteria bacterium Yellowstone A-Prime).